A 692-amino-acid polypeptide reads, in one-letter code: Formate hydrogenlyase transcriptional activator (692 aa).

The 143-residue stretch at 202 to 344 (DIDELVSEVA…QIAERVAIAV (143 aa)) folds into the GAF domain. Residues 381–610 (IIGRSEAMYN…LENVVERAVL (230 aa)) form the Sigma-54 factor interaction domain. Residues 409–416 (GETGTGKE) and 472–481 (ADKSSLFLDE) each bind ATP. Residues 663–682 (PKGAAQRLGLKRTTLLSRMK) constitute a DNA-binding region (H-T-H motif).

Functionally, required for induction of expression of the formate dehydrogenase H and hydrogenase-3 structural genes. In Salmonella typhimurium (strain SL1344), this protein is Formate hydrogenlyase transcriptional activator (fhlA).